Consider the following 191-residue polypeptide: Surfactant protein C (191 aa).

A propeptide spanning residues 1-23 (MDVGSKEVLMESPPDYSAAPRGR) is cleaved from the precursor. 2 S-palmitoyl cysteine lipidation sites follow: Cys-28 and Cys-29. Residues 59–191 (HMSQKHTEMV…LCGEVPLYYI (133 aa)) constitute a propeptide that is removed on maturation. The BRICHOS domain occupies 94 to 191 (FSFGSTGLVV…LCGEVPLYYI (98 aa)). Cys-121 and Cys-183 are joined by a disulfide.

The protein localises to the secreted. The protein resides in the extracellular space. It is found in the surface film. Its function is as follows. Pulmonary surfactant associated proteins promote alveolar stability by lowering the surface tension at the air-liquid interface in the peripheral air spaces. This chain is Surfactant protein C (SFTPC), found in Macaca mulatta (Rhesus macaque).